We begin with the raw amino-acid sequence, 197 residues long: Thymidylate kinase (197 aa).

7–14 is an ATP binding site; the sequence is GIDGSGKS.

The protein belongs to the thymidylate kinase family.

It catalyses the reaction dTMP + ATP = dTDP + ADP. Functionally, phosphorylation of dTMP to form dTDP in both de novo and salvage pathways of dTTP synthesis. In Thermotoga maritima (strain ATCC 43589 / DSM 3109 / JCM 10099 / NBRC 100826 / MSB8), this protein is Thymidylate kinase (tmk).